The following is a 272-amino-acid chain: NH(3)-dependent NAD(+) synthetase (272 aa).

45–52 (GISGGQDS) is a binding site for ATP. Asp51 is a Mg(2+) binding site. Position 138 (Arg138) interacts with deamido-NAD(+). ATP is bound at residue Thr158. Glu163 is a Mg(2+) binding site. Residues Lys171 and Asp178 each contribute to the deamido-NAD(+) site. ATP is bound by residues Lys187 and Thr209. 258 to 259 (HK) contributes to the deamido-NAD(+) binding site.

Belongs to the NAD synthetase family. As to quaternary structure, homodimer.

It carries out the reaction deamido-NAD(+) + NH4(+) + ATP = AMP + diphosphate + NAD(+) + H(+). It functions in the pathway cofactor biosynthesis; NAD(+) biosynthesis; NAD(+) from deamido-NAD(+) (ammonia route): step 1/1. In terms of biological role, catalyzes the ATP-dependent amidation of deamido-NAD to form NAD. Uses ammonia as a nitrogen source. In Bacillus velezensis (strain DSM 23117 / BGSC 10A6 / LMG 26770 / FZB42) (Bacillus amyloliquefaciens subsp. plantarum), this protein is NH(3)-dependent NAD(+) synthetase.